We begin with the raw amino-acid sequence, 358 residues long: 3'(2'),5'-bisphosphate nucleotidase 2 (358 aa).

Asp-54 acts as the Proton acceptor in catalysis. Glu-77, Asp-141, Ile-143, and Asp-144 together coordinate Mg(2+). The Proton acceptor role is filled by Thr-146. Thr-146, His-243, Ser-272, Lys-275, Arg-289, and Asp-302 together coordinate adenosine 3',5'-bisphosphate. AMP-binding residues include His-243, Ser-272, Lys-275, Arg-289, and Asp-302. Asp-302 contacts Mg(2+).

It belongs to the inositol monophosphatase superfamily. Mg(2+) serves as cofactor.

It carries out the reaction 3'-phosphoadenylyl sulfate + H2O = adenosine 5'-phosphosulfate + phosphate. The enzyme catalyses adenosine 3',5'-bisphosphate + H2O = AMP + phosphate. It catalyses the reaction adenosine 2',5'-bisphosphate + H2O = AMP + phosphate. In terms of biological role, phosphatase that converts adenosine 3'-phosphate 5'-phosphosulfate (PAPS) to adenosine 5'-phosphosulfate (APS) and 3'(2')-phosphoadenosine 5'-phosphate (PAP) to AMP. Regulates the flux of sulfur in the sulfur-activation pathway by converting PAPS to APS. Involved in salt tolerance. The protein is 3'(2'),5'-bisphosphate nucleotidase 2 (HAL22) of Candida albicans (strain SC5314 / ATCC MYA-2876) (Yeast).